Reading from the N-terminus, the 150-residue chain is Large ribosomal subunit protein bL9 (150 aa).

Belongs to the bacterial ribosomal protein bL9 family.

Binds to the 23S rRNA. In Streptococcus equi subsp. equi (strain 4047), this protein is Large ribosomal subunit protein bL9.